Here is a 272-residue protein sequence, read N- to C-terminus: Activator of basal transcription 1 (272 aa).

At Met1 the chain carries N-acetylmethionine. Residues 1–17 (MEAEESEKAATEQEPLK) show a composition bias toward basic and acidic residues. The segment at 1 to 38 (MEAEESEKAATEQEPLKGTEQTLDAEEEQEESEDAACG) is disordered. Over residues 23-34 (LDAEEEQEESED) the composition is skewed to acidic residues. Residues 46–142 (GIVYLGHIPP…RRRSPFRYDL (97 aa)) form the RRM domain. The stretch at 161–191 (AFERQVRRQRLRAEVAQAKRETDFYLQSVER) forms a coiled coil. The disordered stretch occupies residues 197–272 (AADGDPARPD…MEGPSLVRDS (76 aa)).

This sequence belongs to the ESF2/ABP1 family. In terms of assembly, interacts with ESF1/ABTAP. Interacts with IGHMBP2.

The protein resides in the nucleus. Its subcellular location is the nucleolus. Its function is as follows. Could be a novel TATA-binding protein (TBP) which can function as a basal transcription activator. Can act as a regulator of basal transcription for class II genes. The protein is Activator of basal transcription 1 (ABT1) of Pongo abelii (Sumatran orangutan).